The chain runs to 286 residues: 33 kDa chaperonin (286 aa).

Disulfide bonds link Cys-225–Cys-227 and Cys-258–Cys-261.

It belongs to the HSP33 family. Under oxidizing conditions two disulfide bonds are formed involving the reactive cysteines. Under reducing conditions zinc is bound to the reactive cysteines and the protein is inactive.

The protein localises to the cytoplasm. In terms of biological role, redox regulated molecular chaperone. Protects both thermally unfolding and oxidatively damaged proteins from irreversible aggregation. Plays an important role in the bacterial defense system toward oxidative stress. The chain is 33 kDa chaperonin from Shewanella oneidensis (strain ATCC 700550 / JCM 31522 / CIP 106686 / LMG 19005 / NCIMB 14063 / MR-1).